Reading from the N-terminus, the 531-residue chain is Peptide chain release factor 3 (531 aa).

The tr-type G domain occupies 13-282 (AKRRTFAIIS…TLIKYAPPPK (270 aa)). GTP-binding positions include 22–29 (SHPDAGKT), 90–94 (DTPGH), and 144–147 (NKLD).

It belongs to the TRAFAC class translation factor GTPase superfamily. Classic translation factor GTPase family. PrfC subfamily.

The protein localises to the cytoplasm. Its function is as follows. Increases the formation of ribosomal termination complexes and stimulates activities of RF-1 and RF-2. It binds guanine nucleotides and has strong preference for UGA stop codons. It may interact directly with the ribosome. The stimulation of RF-1 and RF-2 is significantly reduced by GTP and GDP, but not by GMP. This chain is Peptide chain release factor 3, found in Psychrobacter cryohalolentis (strain ATCC BAA-1226 / DSM 17306 / VKM B-2378 / K5).